Consider the following 842-residue polypeptide: Alanine--tRNA ligase (842 aa).

4 residues coordinate Zn(2+): H549, H553, C650, and H654.

It belongs to the class-II aminoacyl-tRNA synthetase family. It depends on Zn(2+) as a cofactor.

The protein localises to the cytoplasm. The catalysed reaction is tRNA(Ala) + L-alanine + ATP = L-alanyl-tRNA(Ala) + AMP + diphosphate. In terms of biological role, catalyzes the attachment of alanine to tRNA(Ala) in a two-step reaction: alanine is first activated by ATP to form Ala-AMP and then transferred to the acceptor end of tRNA(Ala). Also edits incorrectly charged Ser-tRNA(Ala) and Gly-tRNA(Ala) via its editing domain. The protein is Alanine--tRNA ligase of Campylobacter jejuni subsp. jejuni serotype O:23/36 (strain 81-176).